We begin with the raw amino-acid sequence, 634 residues long: Probable potassium transport system protein Kup (634 aa).

Helical transmembrane passes span 21–41, 58–78, 110–130, 147–167, 179–199, 223–243, 258–278, 296–316, 348–368, 377–397, 403–423, and 427–447; these read LVIG…LYTL, VLGI…LKYV, MYVV…DGVI, APKL…MLFL, AFGP…VYNM, WHAV…EALY, WQFV…ALVL, ALYP…QALI, IYVP…VIGF, AYGV…IIYA, VPAP…CAFF, and IIKF…LFTL.

The protein belongs to the HAK/KUP transporter (TC 2.A.72) family.

It is found in the cell inner membrane. It carries out the reaction K(+)(in) + H(+)(in) = K(+)(out) + H(+)(out). Transport of potassium into the cell. Likely operates as a K(+):H(+) symporter. This chain is Probable potassium transport system protein Kup, found in Xanthomonas axonopodis pv. citri (strain 306).